A 505-amino-acid polypeptide reads, in one-letter code: Probable RNA exonuclease NGL3 (505 aa).

2 disordered regions span residues 1-75 (MDSQ…FPTP) and 334-369 (RNGE…SFTA). Positions 10-23 (SPSQKESSSTSGLV) are enriched in polar residues. The span at 36–54 (HRDQLSVDQIKKIREERAQ) shows a compositional bias: basic and acidic residues. Serine 62 is modified (phosphoserine). The span at 338–347 (ESDQDDEECD) shows a compositional bias: acidic residues.

Belongs to the CCR4/nocturin family.

This is Probable RNA exonuclease NGL3 (NGL3) from Saccharomyces cerevisiae (strain ATCC 204508 / S288c) (Baker's yeast).